A 295-amino-acid polypeptide reads, in one-letter code: Pantothenate synthetase (295 aa).

30–37 (MGNLHDGH) provides a ligand contact to ATP. His-37 serves as the catalytic Proton donor. A (R)-pantoate-binding site is contributed by Gln-61. Beta-alanine is bound at residue Gln-61. Residue 149 to 152 (GEKD) participates in ATP binding. Gln-155 serves as a coordination point for (R)-pantoate. Residues Val-178 and 186–189 (MSSR) each bind ATP.

Belongs to the pantothenate synthetase family. As to quaternary structure, homodimer.

The protein resides in the cytoplasm. It catalyses the reaction (R)-pantoate + beta-alanine + ATP = (R)-pantothenate + AMP + diphosphate + H(+). It participates in cofactor biosynthesis; (R)-pantothenate biosynthesis; (R)-pantothenate from (R)-pantoate and beta-alanine: step 1/1. Catalyzes the condensation of pantoate with beta-alanine in an ATP-dependent reaction via a pantoyl-adenylate intermediate. This is Pantothenate synthetase from Photobacterium profundum (strain SS9).